We begin with the raw amino-acid sequence, 355 residues long: uncharacterized protein (355 aa).

Residues 9–75 form the J domain; it reads DYYDILNISV…KLREKYDKLG (67 aa).

This sequence belongs to the DnaJ family.

The protein resides in the cytoplasm. This is an uncharacterized protein from Schizosaccharomyces pombe (strain 972 / ATCC 24843) (Fission yeast).